The following is a 323-amino-acid chain: Ig gamma chain C region (323 aa).

Ig-like domains follow at residues 6–96, 114–213, and 222–318; these read PSVF…KTVA, PSVF…KTIS, and PKVY…KSIS.

The sequence is that of Ig gamma chain C region from Oryctolagus cuniculus (Rabbit).